Here is a 296-residue protein sequence, read N- to C-terminus: 4-hydroxy-tetrahydrodipicolinate synthase (296 aa).

A pyruvate-binding site is contributed by Thr-45. Tyr-133 acts as the Proton donor/acceptor in catalysis. Catalysis depends on Lys-161, which acts as the Schiff-base intermediate with substrate. Ile-203 contributes to the pyruvate binding site.

The protein belongs to the DapA family. As to quaternary structure, homotetramer; dimer of dimers.

The protein localises to the cytoplasm. The catalysed reaction is L-aspartate 4-semialdehyde + pyruvate = (2S,4S)-4-hydroxy-2,3,4,5-tetrahydrodipicolinate + H2O + H(+). The protein operates within amino-acid biosynthesis; L-lysine biosynthesis via DAP pathway; (S)-tetrahydrodipicolinate from L-aspartate: step 3/4. Its function is as follows. Catalyzes the condensation of (S)-aspartate-beta-semialdehyde [(S)-ASA] and pyruvate to 4-hydroxy-tetrahydrodipicolinate (HTPA). This Idiomarina loihiensis (strain ATCC BAA-735 / DSM 15497 / L2-TR) protein is 4-hydroxy-tetrahydrodipicolinate synthase.